The chain runs to 253 residues: Sulfate transporter CysZ (253 aa).

4 consecutive transmembrane segments (helical) span residues 31-51 (FVIL…WWLF), 72-92 (LSYL…GYFF), 151-171 (IVLL…PVLW), and 222-242 (IPVL…AMWV).

This sequence belongs to the CysZ family.

It is found in the cell inner membrane. Possibly involved in sulfate transport. Its function is as follows. High affinity, high specificity proton-dependent sulfate transporter, which mediates sulfate uptake. Provides the sulfur source for the cysteine synthesis pathway. This chain is Sulfate transporter CysZ, found in Salmonella typhimurium (strain LT2 / SGSC1412 / ATCC 700720).